The primary structure comprises 663 residues: Probable acetolactate synthase 2, chloroplastic (663 aa).

Residues 1-26 show a composition bias toward low complexity; it reads MAAAAAAASLSVSDAAAKLPKPGGQV. A disordered region spans residues 1–56; it reads MAAAAAAASLSVSDAAAKLPKPGGQVQRRRDRDRPRVDAAACTRDSRRPTRERCST. The transit peptide at 1-79 directs the protein to the chloroplast; that stretch reads MAAAAAAASL…TPVRAPVRTR (79 aa). 2 stretches are compositionally biased toward basic and acidic residues: residues 28–37 and 44–54; these read RRRDRDRPRV and RDSRRPTRERC. Glu-132 contacts thiamine diphosphate. An intrachain disulfide couples Cys-152 to Cys-298. Residues Arg-234, 340 to 361, and 383 to 402 each bind FAD; these read HGTVYANYAVDNADLLLALGVR and DIDPSELGKNKQPHVSICAD. The thiamine pyrophosphate binding stretch occupies residues 478 to 558; it reads QHQMWATQHY…VKVMVLNNQH (81 aa). Mg(2+) contacts are provided by Asp-529 and Asn-556.

The protein belongs to the TPP enzyme family. The cofactor is Mg(2+). Requires thiamine diphosphate as cofactor.

The protein localises to the plastid. It localises to the chloroplast. It carries out the reaction 2 pyruvate + H(+) = (2S)-2-acetolactate + CO2. Its pathway is amino-acid biosynthesis; L-isoleucine biosynthesis; L-isoleucine from 2-oxobutanoate: step 1/4. It participates in amino-acid biosynthesis; L-valine biosynthesis; L-valine from pyruvate: step 1/4. This chain is Probable acetolactate synthase 2, chloroplastic (ALS2), found in Oryza sativa subsp. japonica (Rice).